The primary structure comprises 321 residues: Malate dehydrogenase (321 aa).

Residues 13–18 and Asp38 each bind NAD(+); that span reads GAGNIG. Substrate-binding residues include Arg87 and Arg93. NAD(+)-binding positions include Asn100 and 123-125; that span reads VTN. 2 residues coordinate substrate: Asn125 and Arg156. Catalysis depends on His180, which acts as the Proton acceptor.

The protein belongs to the LDH/MDH superfamily. MDH type 3 family.

It carries out the reaction (S)-malate + NAD(+) = oxaloacetate + NADH + H(+). Catalyzes the reversible oxidation of malate to oxaloacetate. The sequence is that of Malate dehydrogenase from Anaplasma phagocytophilum (strain HZ).